Reading from the N-terminus, the 588-residue chain is Succinate dehydrogenase flavoprotein subunit (588 aa).

FAD contacts are provided by residues 14–19 (GAGGAG), 37–52 (SKVF…AQGG), and Asp221. Residue His45 is modified to Tele-8alpha-FAD histidine. Positions 242 and 254 each coordinate substrate. The active-site Proton acceptor is Arg286. His354 contacts substrate. Glu388 contacts FAD. Arg399 serves as a coordination point for substrate. Residue 404–405 (SL) coordinates FAD.

This sequence belongs to the FAD-dependent oxidoreductase 2 family. FRD/SDH subfamily. As to quaternary structure, part of an enzyme complex containing four subunits: a flavoprotein, an iron-sulfur, cytochrome b-556, and a hydrophobic anchor protein. The cofactor is FAD.

It localises to the cell inner membrane. It carries out the reaction a quinone + succinate = fumarate + a quinol. It functions in the pathway carbohydrate metabolism; tricarboxylic acid cycle; fumarate from succinate (bacterial route): step 1/1. Its function is as follows. Two distinct, membrane-bound, FAD-containing enzymes are responsible for the catalysis of fumarate and succinate interconversion; the fumarate reductase is used in anaerobic growth, and the succinate dehydrogenase is used in aerobic growth. The protein is Succinate dehydrogenase flavoprotein subunit (sdhA) of Salmonella typhimurium (strain LT2 / SGSC1412 / ATCC 700720).